An 893-amino-acid polypeptide reads, in one-letter code: Serine/threonine-protein kinase PLK4 (893 aa).

The region spanning 12 to 265 is the Protein kinase domain; that stretch reads FRVGNLLGKG…LSSVLDHPFM (254 aa). Residues 18 to 26 and lysine 41 contribute to the ATP site; that span reads LGKGSFAGV. An N6-acetyllysine mark is found at lysine 45 and lysine 46. Aspartate 136 functions as the Proton acceptor in the catalytic mechanism. Residues 349–358 show a composition bias toward polar residues; that stretch reads NQEQETSNSG. The segment at 349 to 393 is disordered; sequence NQEQETSNSGRGRVIQEAEERPHSRYLRRAHSSDRSETSHGQSRV. Basic and acidic residues predominate over residues 362 to 371; that stretch reads VIQEAEERPH. A phosphoserine mark is found at serine 403 and serine 588. In terms of domain architecture, Cryptic POLO box 1 (CPB1) spans 509–622; the sequence is TLRSITSPLT…SRFVQLVRSK (114 aa). The Cryptic POLO box 2 (CPB2) domain occupies 623-736; it reads SPKITYFTRY…GRRPSSTSSP (114 aa). Residues 730 to 749 are disordered; sequence PSSTSSPKALTPPPPVDPNY. Positions 809–887 constitute a POLO box domain; that stretch reads QLLKSVFVKN…LSSILLMFSN (79 aa).

The protein belongs to the protein kinase superfamily. Ser/Thr protein kinase family. CDC5/Polo subfamily. As to quaternary structure, homodimer. Interacts with CEP152 (via N-terminus). Interacts with CEP78; this interaction may be important for proper PLK4 localization to the centriole and PLK4-induced overduplication of centrioles. Interacts with CEP131. Interacts simultaneously with TENT5C and CEP192. Interacts with TENT5C; this interaction leads to the TENT5C recruitment in the centrosome. Interacts with CEP85; this interaction may be important in cell migration and centriole assembly. Ubiquitinated; leading to its degradation by the proteasome. Post-translationally, tyrosine-phosphorylated by TEC. In terms of processing, acetylation by KAT2A and KAT2B impairs kinase activity by shifting the kinase to an inactive conformation.

The protein localises to the cytoplasm. It localises to the cytoskeleton. The protein resides in the microtubule organizing center. It is found in the centrosome. Its subcellular location is the centriole. The protein localises to the nucleus. It localises to the nucleolus. The protein resides in the cleavage furrow. The catalysed reaction is L-seryl-[protein] + ATP = O-phospho-L-seryl-[protein] + ADP + H(+). It carries out the reaction L-threonyl-[protein] + ATP = O-phospho-L-threonyl-[protein] + ADP + H(+). Functionally, serine/threonine-protein kinase that plays a central role in centriole duplication. Able to trigger procentriole formation on the surface of the parental centriole cylinder, leading to the recruitment of centriole biogenesis proteins such as SASS6, CPAP, CCP110, CEP135 and gamma-tubulin. When overexpressed, it is able to induce centrosome amplification through the simultaneous generation of multiple procentrioles adjoining each parental centriole during S phase. Phosphorylates 'Ser-151' of FBXW5 during the G1/S transition, leading to inhibit FBXW5 ability to ubiquitinate SASS6. Its central role in centriole replication suggests a possible role in tumorigenesis, centrosome aberrations being frequently observed in tumors. Also involved in deuterosome-mediated centriole amplification in multiciliated that can generate more than 100 centrioles. Also involved in trophoblast differentiation by phosphorylating HAND1, leading to disrupt the interaction between HAND1 and MDFIC and activate HAND1. Phosphorylates CDC25C and CHEK2. Required for the recruitment of STIL to the centriole and for STIL-mediated centriole amplification. Phosphorylates CEP131 and PCM1 which is essential for proper organization and integrity of centriolar satellites. This Bos taurus (Bovine) protein is Serine/threonine-protein kinase PLK4.